An 829-amino-acid polypeptide reads, in one-letter code: MENDNYDVEEQGCSVFNGKHGYFARSCCVVFILIICVIFVFSVIFTFMQNPINLNSDNGFNQTSGNTSSLEATTLKPKFSSLMTTTRRFTFEQLFSGKQFLVDYYDYIWLPDGSFVQMNDDFTIRKQMKKIPLGSSVAEPFFNNGEYVKALSSNMKYAYGSKKVNELWRHSAEYLYHIVKINNKTVSTEQWHVGPEENSLIQAFYWNPNASSNDFVYVHNYNLYYQKDPEKPDGAIQLTVGGSTFNRFGLANWLYEEEILEASSAVWWSPSGRYVSYLRFDDREVNRIFLPKYTDDDSYVEYFELPYPKAGVQNNTLVTQYIWDSENHKIVETAPPNELSAANGDYYVLTNKWITMPRNGSDLGEERLVTVWANRDQNHVYFSLCNEQDCVMALSFQFSIDNRQLWVSPKDVRGVFPTETGFLTVLPHKHDDGNIYNHVAHVELDGTGTGKITKWIGENFDVILVLGYSSKIDALTFSAYGDGVGEFSTYIVREAMYSNKKTTLQKVTDQFEDCKTLGSQSADPTGQRIVVQCEKPFDNTRLYLVDVVDTTKKIMLEGGTKAVIPFDVPNMKFGKLKLPSGIDGHYMMLTPANLLDGAKIPLLLDIYGGPDSKQVFQKTPTAHAIQIVSQYDIAYARIDVRGTGGRGWDVKEAVYRKLGDAEVVDTLDMIRAFINTFGFIDEDRIAVMGWSYGGFLTSKIAIKDQGELVKCAISIAPVTDFKYYDSAYTERYLGQPAENLQGYINTNVIPHARNVTNVKYLLAHGERDDNVHYQNSARWSEALQQNGIHFTQLVYANEAHSLSHKLFHLYGEVQRFLMNDCFKSNLDLL.

Over 1-27 (MENDNYDVEEQGCSVFNGKHGYFARSC) the chain is Cytoplasmic. A helical; Signal-anchor for type II membrane protein membrane pass occupies residues 28–48 (CVVFILIICVIFVFSVIFTFM). Topologically, residues 49–829 (QNPINLNSDN…DCFKSNLDLL (781 aa)) are extracellular. Asn61, Asn66, Asn183, Asn209, Asn314, and Asn359 each carry an N-linked (GlcNAc...) asparagine glycan. Cysteines 514 and 533 form a disulfide. Ser691 (charge relay system) is an active-site residue. Cys711 and Cys821 form a disulfide bridge. Residue Asn754 is glycosylated (N-linked (GlcNAc...) asparagine). Catalysis depends on charge relay system residues Asp768 and His800.

It belongs to the peptidase S9B family. DPPIV subfamily.

Its subcellular location is the cell membrane. Removes N-terminal dipeptides sequentially from polypeptides. Essential for control of distal tip cell migration. The polypeptide is Dipeptidyl peptidase family member 2 (dpf-2) (Caenorhabditis elegans).